A 197-amino-acid polypeptide reads, in one-letter code: Ycf20-like protein (197 aa).

Transmembrane regions (helical) follow at residues 113–133 (MKIF…TILG), 138–158 (WDVL…MLMY), and 173–193 (FVVF…VDAF).

The protein belongs to the ycf20 family.

Its subcellular location is the membrane. The protein is Ycf20-like protein of Arabidopsis thaliana (Mouse-ear cress).